The sequence spans 514 residues: FAD-dependent monooxygenase CPUR_05423 (514 aa).

Val-79 and Arg-146 together coordinate FAD. The active site involves Arg-227. FAD is bound by residues Asp-358 and Gly-371.

The protein belongs to the paxM FAD-dependent monooxygenase family. FAD serves as cofactor.

The protein operates within pigment biosynthesis. In terms of biological role, FAD-dependent monooxygenase; part of the ergochrome gene cluster responsible for the typical purple-black color of the ergot sclerotia. The ergochrome gene cluster produces several ergot pigments including the yellow ergochrome secalonic acid and its derivatives, as well as the red anthraquinones endocrocin and clavorubin. The pathway begins with the synthesis of atrochrysone thioester by the polyketide synthase (PKS) CPUR_05437. The atrochrysone carboxyl ACP thioesterase CPUR_05436 then breaks the thioester bond and releases the atrochrysone carboxylic acid from CPUR_05437. The atrochrysone carboxylic acid is then converted to atrochrysone which is further transformed into emodin anthrone. The next step is performed by the anthrone oxygenase CPUR_05434 that catalyzes the oxidation of emodinanthrone to emodin. Emodin is further modified to yield monodictyphenone via several steps involving CPUR_05427, CPUR_05428, CPUR_05429 and CPUR_05430. The short chain dehydrogenase/reductase CPUR_05418 then catalyzes the C-5 ketoreduction to give the xanthone skeleton of the monomeric units. Ergochromes formation requires further dimerization steps of different xanthone units, probably catalyzed by the cytochrome P450 monooxygenase CPUR_05419. CPUR_05425, CPUR_05426 and CPUR_05431 are unique to Claviceps, thus it is likely that they are involved in further modification of xanthone units or in their dimerization. The yellow ergochromes and the red anthraquinone pigments endocrocin and clavorubin are products from the same PKS derived precursors and the latter are likely shunt products in the pathway of xanthone biosynthesis. It is proposed that atrochrysone carboxylic acid released from the PKS CPUR_05437 can also be converted to endocrocin anthrone which is further oxidized into endocrocin by CPUR_05435. Endocrocin could be then modified to clavorubin, possibly by CPUR_05423 and CPUR_05431. Clavorubin is the principal anthraquinone metabolite produced by the cluster with a much higher yield compared to endocrocin. The polypeptide is FAD-dependent monooxygenase CPUR_05423 (Claviceps purpurea (strain 20.1) (Ergot fungus)).